Here is a 486-residue protein sequence, read N- to C-terminus: Zinc metalloproteinase-disintegrin VMP-II (486 aa).

The first 20 residues, 1–20 (MIQVLLVTICLAVFPYQGSS), serve as a signal peptide directing secretion. Positions 21 to 190 (IILESGNVND…KASQSNLPPE (170 aa)) are excised as a propeptide. Glutamine 191 bears the Pyrrolidone carboxylic acid mark. The 198-residue stretch at 197–394 (RYIELVVVAD…HYTTCLYNEP (198 aa)) folds into the Peptidase M12B domain. 2 residues coordinate Ca(2+): glutamate 200 and aspartate 284. Disulfide bonds link cysteine 308-cysteine 389, cysteine 348-cysteine 372, and cysteine 350-cysteine 355. Histidine 333 serves as a coordination point for Zn(2+). Residue glutamate 334 is part of the active site. Zn(2+) contacts are provided by histidine 337 and histidine 343. The Ca(2+) site is built by cysteine 389 and asparagine 392. A Disintegrin domain is found at 402 to 486 (PPVCGNYYTE…AECPNKGYYG (85 aa)). Intrachain disulfides connect cysteine 405–cysteine 424, cysteine 416–cysteine 434, cysteine 418–cysteine 429, cysteine 428–cysteine 451, cysteine 442–cysteine 448, cysteine 447–cysteine 472, and cysteine 460–cysteine 479. Residues 464-466 (RGD) carry the Cell attachment site motif.

This sequence belongs to the venom metalloproteinase (M12B) family. P-II subfamily. P-IIb sub-subfamily. As to quaternary structure, monomer. Zn(2+) is required as a cofactor. Expressed by the venom gland.

It is found in the secreted. Snake venom zinc metalloproteinase that inhibits ADP-induced platelet aggregation (probably by binding integrin alpha-IIb/beta-3 (ITGA2B/ITGB3)) and degrades fibrinogen. The polypeptide is Zinc metalloproteinase-disintegrin VMP-II (Crotalus atrox (Western diamondback rattlesnake)).